A 178-amino-acid chain; its full sequence is Ribosome maturation factor RimM (178 aa).

The PRC barrel domain occupies 101–178; that stretch reads ADEYYWYQLV…VMRVEWDADF (78 aa).

The protein belongs to the RimM family. As to quaternary structure, binds ribosomal protein uS19.

It is found in the cytoplasm. An accessory protein needed during the final step in the assembly of 30S ribosomal subunit, possibly for assembly of the head region. Essential for efficient processing of 16S rRNA. May be needed both before and after RbfA during the maturation of 16S rRNA. It has affinity for free ribosomal 30S subunits but not for 70S ribosomes. The chain is Ribosome maturation factor RimM from Pseudomonas putida (strain GB-1).